A 359-amino-acid polypeptide reads, in one-letter code: MAISRLLVEKFRNLTAVDLDFDPCFNFLIGNNGSGKTSLLEAIFYLGHGRSFKSAVTNRIISYDEPHFTLFGQIQESQHQWSVGLQKLRQGNTLVKINGEDGNKISDLAHLLPMQLITPEGLTLLNGGPSYRRAFLDWGLFHHQTSFYSAWSNLNRLLKQRNAALAQNQPYSAIKIWDVELAKLAHQVSQWRAEYAEALRPEIEQTCQLFLPELEINVSFHQGWEKNADYYEILQQNFERDRALNYTFSGPQKADFRFKAQGLPVEDVLSRGQLKLLMCVLRLAQGEHLMKEKQRHCIFLIDDFASELDQYKRALLAERLQQSGSQVFVTAITQRQLKEMQVENKKMFSVHNGIINALN.

Residue 30 to 37 (GNNGSGKT) participates in ATP binding.

The protein belongs to the RecF family.

It localises to the cytoplasm. Functionally, the RecF protein is involved in DNA metabolism; it is required for DNA replication and normal SOS inducibility. RecF binds preferentially to single-stranded, linear DNA. It also seems to bind ATP. The protein is DNA replication and repair protein RecF of Haemophilus influenzae (strain 86-028NP).